The following is a 432-amino-acid chain: uncharacterized protein (432 aa).

SIS domains lie at 105–244 (WLTE…DLVS) and 277–422 (CDKK…VDLP).

This is an uncharacterized protein from Saccharomyces cerevisiae (strain ATCC 204508 / S288c) (Baker's yeast).